We begin with the raw amino-acid sequence, 157 residues long: Ubiquitin-like protein 4A (157 aa).

Residues 1–76 (MQLTVKALQG…LNLVVKPLEK (76 aa)) enclose the Ubiquitin-like domain. K48 participates in a covalent cross-link: Glycyl lysine isopeptide (Lys-Gly) (interchain with G-Cter in ubiquitin). A Phosphoserine modification is found at S90. Residues 96–138 (WQLISKVLARHFSAADASRVLEQPQRDYERSLSRLTLDDIERL) form a required and sufficient for interaction with BAG6 region.

As to quaternary structure, component of the BAG6/BAT3 complex, at least composed of BAG6, UBL4A and GET4/TRC35. Interacts with BAG6; the interaction is direct and required for UBL4A protein stability. Interacts with USP13; may be indirect via BAG6. Post-translationally, polyubiquitinated. Ubiquitination by AMFR and deubiquitination by USP13 may regulate the interaction between the BAG6/BAT complex and SGTA and therefore may regulate client proteins fate.

The protein localises to the cytoplasm. Its subcellular location is the cytosol. The protein resides in the nucleus. Its function is as follows. As part of a cytosolic protein quality control complex, the BAG6/BAT3 complex, maintains misfolded and hydrophobic patches-containing proteins in a soluble state and participates in their proper delivery to the endoplasmic reticulum or alternatively can promote their sorting to the proteasome where they undergo degradation. The BAG6/BAT3 complex is involved in the post-translational delivery of tail-anchored/type II transmembrane proteins to the endoplasmic reticulum membrane. Recruited to ribosomes, it interacts with the transmembrane region of newly synthesized tail-anchored proteins and together with SGTA and ASNA1 mediates their delivery to the endoplasmic reticulum. Client proteins that cannot be properly delivered to the endoplasmic reticulum are ubiquitinated and sorted to the proteasome. Similarly, the BAG6/BAT3 complex also functions as a sorting platform for proteins of the secretory pathway that are mislocalized to the cytosol either delivering them to the proteasome for degradation or to the endoplasmic reticulum. The BAG6/BAT3 complex also plays a role in the endoplasmic reticulum-associated degradation (ERAD), a quality control mechanism that eliminates unwanted proteins of the endoplasmic reticulum through their retrotranslocation to the cytosol and their targeting to the proteasome. It maintains these retrotranslocated proteins in an unfolded yet soluble state condition in the cytosol to ensure their proper delivery to the proteasome. In Pongo abelii (Sumatran orangutan), this protein is Ubiquitin-like protein 4A (UBL4A).